A 149-amino-acid chain; its full sequence is Urease accessory protein UreE (149 aa).

The protein belongs to the UreE family.

It localises to the cytoplasm. Its function is as follows. Involved in urease metallocenter assembly. Binds nickel. Probably functions as a nickel donor during metallocenter assembly. The protein is Urease accessory protein UreE of Prochlorococcus marinus (strain AS9601).